Here is a 323-residue protein sequence, read N- to C-terminus: Phosphatidylglycerol--prolipoprotein diacylglyceryl transferase (323 aa).

The next 3 helical transmembrane spans lie at 15-35 (VIQG…ILIS), 58-78 (FMFS…TLVY), and 106-126 (GMAI…TINT). An a 1,2-diacyl-sn-glycero-3-phospho-(1'-sn-glycerol)-binding site is contributed by R156. 2 helical membrane passes run 242–262 (GFIF…IEYL) and 289–309 (ISMG…WIIV).

The protein belongs to the Lgt family.

The protein localises to the cell inner membrane. It catalyses the reaction L-cysteinyl-[prolipoprotein] + a 1,2-diacyl-sn-glycero-3-phospho-(1'-sn-glycerol) = an S-1,2-diacyl-sn-glyceryl-L-cysteinyl-[prolipoprotein] + sn-glycerol 1-phosphate + H(+). The protein operates within protein modification; lipoprotein biosynthesis (diacylglyceryl transfer). Catalyzes the transfer of the diacylglyceryl group from phosphatidylglycerol to the sulfhydryl group of the N-terminal cysteine of a prolipoprotein, the first step in the formation of mature lipoproteins. The protein is Phosphatidylglycerol--prolipoprotein diacylglyceryl transferase of Borreliella afzelii (strain PKo) (Borrelia afzelii).